The primary structure comprises 313 residues: Olfactory receptor 1J2 (313 aa).

Over 1–25 (MSPENQSSVSEFLLLGLPIRPEQQA) the chain is Extracellular. N-linked (GlcNAc...) asparagine glycosylation occurs at N5. A helical transmembrane segment spans residues 26-49 (VFFTLFLGMYLTTVLGNLLIMLLI). Topologically, residues 50–57 (QLDSHLHT) are cytoplasmic. A helical transmembrane segment spans residues 58-79 (PMYFFLSHLALTDISFSSVTVP). Over 80 to 100 (KMLMDMRTKYKSILYEECISQ) the chain is Extracellular. Residues C97 and C189 are joined by a disulfide bond. The chain crosses the membrane as a helical span at residues 101–120 (MYFFIFFTDLDSFLITSMAY). Over 121–139 (DRYVAICHPLHYTVIMREE) the chain is Cytoplasmic. A helical membrane pass occupies residues 140–158 (LCVFLVAVSWILSCASSLS). At 159-196 (HTLLLTRLSFCAANTIPHVFCDLAALLKLSCSDIFLNE) the chain is on the extracellular side. A helical transmembrane segment spans residues 197 to 219 (LVMFTVGVVVITLPFMCILVSYG). Over 220–236 (YIGATILRVPSTKGIHK) the chain is Cytoplasmic. A helical membrane pass occupies residues 237–259 (ALSTCGSHLSVVSLYYGSIFGQY). At 260-272 (LFPTVSSSIDKDV) the chain is on the extracellular side. Residues 273–292 (IVALMYTVVTPMLNPFIYSL) form a helical membrane-spanning segment. Topologically, residues 293 to 313 (RNRDMKEALGKLFSRATFFSW) are cytoplasmic.

The protein belongs to the G-protein coupled receptor 1 family.

The protein resides in the cell membrane. Its function is as follows. Odorant receptor. This is Olfactory receptor 1J2 (OR1J2) from Homo sapiens (Human).